An 821-amino-acid chain; its full sequence is MDLAAAAEPGAGSQHLEVRDEVAEKCQKLFLDFLEEFQSSDGEIKYLQLAEELIRPERNTLVVSFVDLEQFNQQLSTTIQEEFYRVYPYLCRALKTFVKDRKEIPLAKDFYVAFQDLPTRHKIRELTSSRIGLLTRISGQVVRTHPVHPELVSGTFLCLDCQTVIRDVEQQFKYTQPNICRNPVCANRRRFLLDTNKSRFVDFQKVRIQETQAELPRGSIPRSLEVILRAEAVESAQAGDKCDFTGTLIVVPDVSKLSTPGARAETNSRVSGVDGYETEGIRGLRALGVRDLSYRLVFLACCVAPTNPRFGGKELRDEEQTAESIKNQMTVKEWEKVFEMSQDKNLYHNLCTSLFPTIHGNDEVKRGVLLMLFGGVPKTTGEGTSLRGDINVCIVGDPSTAKSQFLKHVEEFSPRAVYTSGKASSAAGLTAAVVRDEESHEFVIEAGALMLADNGVCCIDEFDKMDVRDQVAIHEAMEQQTISITKAGVKATLNARTSILAAANPISGHYDRSKSLKQNINLSAPIMSRFDLFFILVDECNEVTDYAIARRIVDLHSRIEESIDRVYSLDDIRRYLLFARQFKPKISKESEDFIVEQYKHLRQRDGSGVTKSSWRITVRQLESMIRLSEAMARMHCCDEVQPKHVKEAFRLLNKSIIRVETPDVNLDQEEEIQMEVDEGAGGINGHADSPAPVNGINGYNEDINQESAPKASLRLGFSEYCRISNLIVLHLRKVEEEEDESALKRSELVNWYLKEIESEIDSEEELINKKRIIEKVIHRLTHYDHVLIELTQAGLKGSTEGSESYEEDPYLVVNPNYLLED.

Met-1 is modified (N-acetylmethionine). A phosphoserine mark is found at Ser-13, Ser-219, and Ser-271. Phosphothreonine is present on Thr-278. The region spanning 346–553 is the MCM domain; it reads LYHNLCTSLF…TDYAIARRIV (208 aa). ATP-binding residues include His-359, Ser-399, Thr-400, Ala-401, Lys-402, Ser-403, and Asn-504. The Arginine finger motif lies at 528 to 531; sequence SRFD. Residues Arg-619 and Glu-622 each coordinate ADP. Position 643 is an N6-acetyllysine (Lys-643). 2 positions are modified to phosphoserine: Ser-689 and Ser-762. Residue Thr-791 is modified to Phosphothreonine.

This sequence belongs to the MCM family. In terms of assembly, component of the MCM2-7 complex. The complex forms a toroidal hexameric ring with the proposed subunit order MCM2-MCM6-MCM4-MCM7-MCM3-MCM5. Component of the CMG helicase complex, a hexameric ring of related MCM2-7 subunits stabilized by CDC45 and the tetrameric GINS complex. May interact with MCM10. Interacts with TIPIN. Interacts with CDT1. Interacts with MCMBP. Interacts with DDI2. Post-translationally, O-glycosylated (O-GlcNAcylated), in a cell cycle-dependent manner.

The protein localises to the nucleus. It is found in the chromosome. The enzyme catalyses ATP + H2O = ADP + phosphate + H(+). Acts as a component of the MCM2-7 complex (MCM complex) which is the replicative helicase essential for 'once per cell cycle' DNA replication initiation and elongation in eukaryotic cells. Core component of CDC45-MCM-GINS (CMG) helicase, the molecular machine that unwinds template DNA during replication, and around which the replisome is built. The active ATPase sites in the MCM2-7 ring are formed through the interaction surfaces of two neighboring subunits such that a critical structure of a conserved arginine finger motif is provided in trans relative to the ATP-binding site of the Walker A box of the adjacent subunit. The six ATPase active sites, however, are likely to contribute differentially to the complex helicase activity. The polypeptide is DNA replication licensing factor MCM6 (Homo sapiens (Human)).